A 278-amino-acid chain; its full sequence is HTH-type transcriptional activator RhaS (278 aa).

In terms of domain architecture, HTH araC/xylS-type spans 174 to 272 (NHLIAWLEDH…GWSPREIRQG (99 aa)). 2 consecutive DNA-binding regions (H-T-H motif) follow at residues 191–212 (EAIADRFALSLRTLHRQLKQHT) and 239–262 (VTHIAFSCGFADSNHFSTLFRREF).

As to quaternary structure, binds DNA as a dimer.

The protein resides in the cytoplasm. Activates expression of the rhaBAD and rhaT operons. This Escherichia fergusonii (strain ATCC 35469 / DSM 13698 / CCUG 18766 / IAM 14443 / JCM 21226 / LMG 7866 / NBRC 102419 / NCTC 12128 / CDC 0568-73) protein is HTH-type transcriptional activator RhaS.